A 216-amino-acid chain; its full sequence is Protein-L-isoaspartate O-methyltransferase (216 aa).

Serine 65 is a catalytic residue.

This sequence belongs to the methyltransferase superfamily. L-isoaspartyl/D-aspartyl protein methyltransferase family.

The protein resides in the cytoplasm. It carries out the reaction [protein]-L-isoaspartate + S-adenosyl-L-methionine = [protein]-L-isoaspartate alpha-methyl ester + S-adenosyl-L-homocysteine. Catalyzes the methyl esterification of L-isoaspartyl residues in peptides and proteins that result from spontaneous decomposition of normal L-aspartyl and L-asparaginyl residues. It plays a role in the repair and/or degradation of damaged proteins. The sequence is that of Protein-L-isoaspartate O-methyltransferase from Chlorobium phaeobacteroides (strain DSM 266 / SMG 266 / 2430).